A 303-amino-acid chain; its full sequence is Light-independent protochlorophyllide reductase iron-sulfur ATP-binding protein (303 aa).

The disordered stretch occupies residues 1–24 (MSSVLERPAAPAILPSRQDGEGSV). Residues 47–52 (GIGKST) and Lys-76 contribute to the ATP site. Ser-51 provides a ligand contact to Mg(2+). Residues Cys-132 and Cys-166 each coordinate [4Fe-4S] cluster. ATP-binding positions include 217–218 (NR) and 241–243 (PDL).

It belongs to the NifH/BchL/ChlL family. As to quaternary structure, homodimer. Protochlorophyllide reductase is composed of three subunits; BchL, BchN and BchB. The cofactor is [4Fe-4S] cluster.

It catalyses the reaction chlorophyllide a + oxidized 2[4Fe-4S]-[ferredoxin] + 2 ADP + 2 phosphate = protochlorophyllide a + reduced 2[4Fe-4S]-[ferredoxin] + 2 ATP + 2 H2O. The protein operates within porphyrin-containing compound metabolism; bacteriochlorophyll biosynthesis (light-independent). Its function is as follows. Component of the dark-operative protochlorophyllide reductase (DPOR) that uses Mg-ATP and reduced ferredoxin to reduce ring D of protochlorophyllide (Pchlide) to form chlorophyllide a (Chlide). This reaction is light-independent. The L component serves as a unique electron donor to the NB-component of the complex, and binds Mg-ATP. This chain is Light-independent protochlorophyllide reductase iron-sulfur ATP-binding protein, found in Rhodospirillum centenum (strain ATCC 51521 / SW).